A 106-amino-acid chain; its full sequence is UPF0091 protein RC0354 (106 aa).

This sequence belongs to the UPF0091 family.

This chain is UPF0091 protein RC0354, found in Rickettsia conorii (strain ATCC VR-613 / Malish 7).